Here is a 154-residue protein sequence, read N- to C-terminus: Prefoldin subunit alpha (154 aa).

Residues 123–154 form a disordered region; it reads EAEQLEQQAQQAQQQMMQQQMQAQQQPQDGEQ. The span at 127 to 154 shows a compositional bias: low complexity; it reads LEQQAQQAQQQMMQQQMQAQQQPQDGEQ.

It belongs to the prefoldin alpha subunit family. Heterohexamer of two alpha and four beta subunits.

Its subcellular location is the cytoplasm. Its function is as follows. Molecular chaperone capable of stabilizing a range of proteins. Seems to fulfill an ATP-independent, HSP70-like function in archaeal de novo protein folding. The chain is Prefoldin subunit alpha from Halobacterium salinarum (strain ATCC 29341 / DSM 671 / R1).